Here is a 524-residue protein sequence, read N- to C-terminus: Ribosomal protein uS12 methylthiotransferase RimO (524 aa).

Over residues 20 to 31 (NSQTASDSTQPA) the composition is skewed to polar residues. Positions 20–59 (NSQTASDSTQPAASAYHHKANHNQNRSIEQSAQQAAEQSL) are disordered. Residues 48 to 58 (EQSAQQAAEQS) show a composition bias toward low complexity. The region spanning 67–177 (PKVGFVSLGC…VITAVSTHAP (111 aa)) is the MTTase N-terminal domain. Positions 76, 112, 141, 216, 220, and 223 each coordinate [4Fe-4S] cluster. Positions 202–443 (LTPSHYAYLK…MAVQQQISEQ (242 aa)) constitute a Radical SAM core domain. Residues 446–519 (QEKVGKTMTV…EYDLFASYDA (74 aa)) enclose the TRAM domain.

Belongs to the methylthiotransferase family. RimO subfamily. [4Fe-4S] cluster is required as a cofactor.

The protein localises to the cytoplasm. It carries out the reaction L-aspartate(89)-[ribosomal protein uS12]-hydrogen + (sulfur carrier)-SH + AH2 + 2 S-adenosyl-L-methionine = 3-methylsulfanyl-L-aspartate(89)-[ribosomal protein uS12]-hydrogen + (sulfur carrier)-H + 5'-deoxyadenosine + L-methionine + A + S-adenosyl-L-homocysteine + 2 H(+). Functionally, catalyzes the methylthiolation of an aspartic acid residue of ribosomal protein uS12. In Psychrobacter sp. (strain PRwf-1), this protein is Ribosomal protein uS12 methylthiotransferase RimO.